A 418-amino-acid chain; its full sequence is UDP-N-acetylglucosamine 1-carboxyvinyltransferase (418 aa).

22–23 (KN) is a phosphoenolpyruvate binding site. Residue arginine 91 participates in UDP-N-acetyl-alpha-D-glucosamine binding. Cysteine 115 acts as the Proton donor in catalysis. Position 115 is a 2-(S-cysteinyl)pyruvic acid O-phosphothioketal (cysteine 115). 2 residues coordinate UDP-N-acetyl-alpha-D-glucosamine: aspartate 305 and isoleucine 327.

It belongs to the EPSP synthase family. MurA subfamily.

It localises to the cytoplasm. The enzyme catalyses phosphoenolpyruvate + UDP-N-acetyl-alpha-D-glucosamine = UDP-N-acetyl-3-O-(1-carboxyvinyl)-alpha-D-glucosamine + phosphate. The protein operates within cell wall biogenesis; peptidoglycan biosynthesis. In terms of biological role, cell wall formation. Adds enolpyruvyl to UDP-N-acetylglucosamine. In Aeromonas salmonicida (strain A449), this protein is UDP-N-acetylglucosamine 1-carboxyvinyltransferase.